The chain runs to 357 residues: Peptide chain release factor 1 (357 aa).

An N5-methylglutamine modification is found at Gln-234.

It belongs to the prokaryotic/mitochondrial release factor family. In terms of processing, methylated by PrmC. Methylation increases the termination efficiency of RF1.

It is found in the cytoplasm. Its function is as follows. Peptide chain release factor 1 directs the termination of translation in response to the peptide chain termination codons UAG and UAA. This is Peptide chain release factor 1 from Lactococcus lactis subsp. cremoris (strain SK11).